A 217-amino-acid polypeptide reads, in one-letter code: Phosphatidylcholine synthase (217 aa).

Residues 1 to 8 (ACIGVFSL) form a helical membrane-spanning segment. The Periplasmic portion of the chain corresponds to 9–16 (VKIYQHEY). A helical transmembrane segment spans residues 17–37 (IFALWLMFITVVIDAVDGTLA). The Cytoplasmic segment spans residues 38 to 50 (RLVNIKKILPKID). The chain crosses the membrane as a helical span at residues 51-71 (GALLDNIVDYLNYVITPCFFL). At 72–77 (LVKPGM) the chain is on the periplasmic side. A helical transmembrane segment spans residues 78 to 98 (LPPEYSVFLIAAVSITSAYQF). The Cytoplasmic segment spans residues 99–107 (CQCDAKTPD). Residues 108–128 (HFFKGFPCYWNITILYMFIFN) traverse the membrane as a helical segment. Thr-129 is a topological domain (periplasmic). Residues 130-149 (SAATNAIILIILSILIFVPV) traverse the membrane as a helical segment. Over 150 to 164 (KYVYPSRLDYLTESR) the chain is Cytoplasmic. A helical transmembrane segment spans residues 165 to 185 (ILKILMHICSIIYAVSSICIL). Topologically, residues 186-191 (ISYPNT) are periplasmic. The helical transmembrane segment at 192–212 (NIICLSLSVAYVGMYLFLSFY) threads the bilayer. Residues 213–217 (RTYYP) lie on the Cytoplasmic side of the membrane.

The protein belongs to the CDP-alcohol phosphatidyltransferase class-I family. Mn(2+) serves as cofactor.

It localises to the cell inner membrane. The enzyme catalyses a CDP-1,2-diacyl-sn-glycerol + choline = a 1,2-diacyl-sn-glycero-3-phosphocholine + CMP + H(+). In terms of biological role, condenses choline with CDP-diglyceride to produce phosphatidylcholine and CMP. This is Phosphatidylcholine synthase from Legionella bozemanae (Fluoribacter bozemanae).